A 330-amino-acid chain; its full sequence is MATMKDVARLAGVSTSTVSHVINKDRFVSEAITAKVEAAIKELNYAPSALARSLKLNQTHTIGMLITASTNPFYSELVRGVERSCFERGYSLVLCNTEGDEQRMNRNLETLMQKRVDGLLLLCTETHQPSREIMQRYPTVPTVMMDWAPFDGDSDLIQDNSLLGGDLATQYLIDKGHTRIACITGPLDKTPARLRLEGYRAAMKRAGLNIPDGYEVTGDFEFNGGFDAMRQLLSHPLRPQAVFTGNDAMAVGVYQALYQAELQVPQDIAVIGYDDIELASFMTPPLTTIHQPKDELGELAIDVLIHRITQPTLQQQRLQLTPILMERGSA.

One can recognise an HTH lacI-type domain in the interval Ala-2–Leu-56. Positions Met-4–Asn-23 form a DNA-binding region, H-T-H motif.

Transcriptional repressor for the ribose rbsDACBK operon. RbsR binds to a region of perfect dyad symmetry spanning the rbs operon transcriptional start site. The affinity for the rbs operator is reduced by addition of ribose, consistent with ribose being the inducer of the operon. The sequence is that of Ribose operon repressor (rbsR) from Escherichia coli O6:H1 (strain CFT073 / ATCC 700928 / UPEC).